We begin with the raw amino-acid sequence, 481 residues long: Mechanosensory protein 2 (481 aa).

Over residues 1-22 the composition is skewed to low complexity; it reads MSATMSSARNSVVSLSSNGSVK. Disordered stretches follow at residues 1 to 67 and 80 to 104; these read MSAT…MATR and SANS…GNGK. The span at 27 to 38 shows a compositional bias: polar residues; that stretch reads LVSNERSSSIQQ. Over residues 86–104 the composition is skewed to basic and acidic residues; it reads DSVKKEKQAEKDVEKGNGK. Residues 115–135 form a helical membrane-spanning segment; that stretch reads GVCGWILTILSYLLIFFTLPI. Gly residues predominate over residues 403–421; sequence EGGGGHGHSHGGGGGGLGS. The disordered stretch occupies residues 403–481; sequence EGGGGHGHSH…SQLDPALLIR (79 aa). The segment covering 433 to 447 has biased composition (low complexity); sequence SGPSTTTTSGRPLLR. The span at 463–473 shows a compositional bias: polar residues; that stretch reads APNQSQTSVSQ.

This sequence belongs to the band 7/mec-2 family. Component of a non-voltage-gated amiloride-sensitive cation channel complex (also called the degenerin channel complex) composed of at least the mec-2, mec-4, mec-6 and mec-10 subunits; the complex mediates mechanotransduction in touch cells. Interacts with mec-6 and mec-4.

Its subcellular location is the membrane. In terms of biological role, subunit of an amiloride-sensitive cation channel (degenerin channel complex) permeable for sodium, potassium, lithium and N-methylglucamine, and required for mechanosensory transduction (touch sensitivity). Positively regulates the activity of the putative mechanosensory transduction channel. May link the mechanosensory channel and the microtubule cytoskeleton of the touch receptor neurons. Required for the function of a set of six touch receptor neurons. This Caenorhabditis elegans protein is Mechanosensory protein 2.